Reading from the N-terminus, the 87-residue chain is U3-theraphotoxin-Hhn1a 3 (87 aa).

The N-terminal stretch at 1 to 24 is a signal peptide; it reads MVNMKASMFLTFAGLVLLFVVCYA. The propeptide occupies 25–52; that stretch reads PESEEKEFPKEMLSSIFAVDNDFKQEER. Intrachain disulfides connect Cys54/Cys67, Cys61/Cys72, and Cys66/Cys79.

The protein belongs to the neurotoxin 10 (Hwtx-1) family. 51 (Hntx-8) subfamily. Hntx-8 sub-subfamily. In terms of tissue distribution, expressed by the venom gland.

The protein resides in the secreted. In terms of biological role, ion channel inhibitor. This is U3-theraphotoxin-Hhn1a 3 from Cyriopagopus hainanus (Chinese bird spider).